The following is a 356-amino-acid chain: Galactosylgalactosylxylosylprotein 3-beta-glucuronosyltransferase sqv-8 (356 aa).

The Cytoplasmic portion of the chain corresponds to 1 to 9; that stretch reads MFPSRLLEK. Residues 10–30 form a helical; Signal-anchor for type II membrane protein membrane-spanning segment; sequence WWLRAFIALVIFFVWQLFYAI. The Lumenal segment spans residues 31 to 356; that stretch reads NRVQSLEEER…LEAHALGVDN (326 aa). 2 N-linked (GlcNAc...) asparagine glycosylation sites follow: Asn-93 and Asn-173. Position 208 (Asp-208) interacts with Mn(2+). Asn-246 and Asn-272 each carry an N-linked (GlcNAc...) asparagine glycan. Glu-294 acts as the Proton acceptor in catalysis.

Belongs to the glycosyltransferase 43 family.

The protein resides in the membrane. It carries out the reaction 3-O-(beta-D-galactosyl-(1-&gt;3)-beta-D-galactosyl-(1-&gt;4)-beta-D-xylosyl)-L-seryl-[protein] + UDP-alpha-D-glucuronate = 3-O-(beta-D-GlcA-(1-&gt;3)-beta-D-Gal-(1-&gt;3)-beta-D-Gal-(1-&gt;4)-beta-D-Xyl)-L-seryl-[protein] + UDP + H(+). Functionally, glycosyltransferase required for the biosynthesis of the tetrasaccharide (GlcA-Gal-Gal-Xyl-)Ser core linker of heparan sulfate and chondroitin sulfate. May be involved in the biosynthesis of the HNK-1 carbohydrate epitope on glycoproteins. Required for embryonic development. Involved in the elongation of the pharyngeal isthmus during the later stages of embryonic development. Involved in vulval epithelium invagination. The chain is Galactosylgalactosylxylosylprotein 3-beta-glucuronosyltransferase sqv-8 (sqv-8) from Caenorhabditis elegans.